Here is a 209-residue protein sequence, read N- to C-terminus: Small ribosomal subunit protein uS4 (209 aa).

The interval 23 to 46 (SRNPLLKKPHPPGQHGMQRKKKSD) is disordered. The S4 RNA-binding domain maps to 93–153 (CRLDNMVYRM…EKSKRLQSVK (61 aa)).

This sequence belongs to the universal ribosomal protein uS4 family. Part of the 30S ribosomal subunit. Contacts protein S5. The interaction surface between S4 and S5 is involved in control of translational fidelity.

Its function is as follows. One of the primary rRNA binding proteins, it binds directly to 16S rRNA where it nucleates assembly of the body of the 30S subunit. Functionally, with S5 and S12 plays an important role in translational accuracy. The protein is Small ribosomal subunit protein uS4 of Chlamydia pneumoniae (Chlamydophila pneumoniae).